Here is a 673-residue protein sequence, read N- to C-terminus: MSGKVEINEPLIVATSAPLRCNCTGGSHFHGKTIANRALGSSQLMKCYSGLLKRCVRREKYIPVSDRGFLDAYTPQTAPGIVFTGSSLVTDSTLMMAPFNFHRQHVLPLEENFGLERARGDVTVDIRTDTDEAVARGLRSDMYERDAVGHIVSKPQKRTTGEMLDELMMTARLSHGNLVRFLGGVACEETRGGKITVKMVELGLCNLDEFIAEPHWIAPKFAIVRQYTLCKLERDTLSGLEYLHMHGVVHGDFRGAKVIVFPTADDFTFKVNLGESTSLGIAPALSRAPYHRAPETEFTGLIGREADMWAWALTMYRAHTCKDFFKKGDPSEPYRVLGPMDNDALDSRRTGRDGDPVNPEGFGTRLEKNATAVDGGFIGLMGKCLALYPQFRPTARELLVYPRYATLHRISGPGPAPPPVIGAAPAVRVVSNAVEFRSRWGVRPSPAMDPRLEARTSWGKNAVRAVGDFTPSFLYREGGLGDTRPGNKRAITLSRGTLRSYVGTENRLTTEIHRSGGADIVLHKVVGRRPDISRANLEYVMKVSNGFPEWYITIDHYTVGVTNVHLYVGYITDDIVYASAIGLSCPLRVDILKGFEKSTLRVDLMGILVTRGLAYTLRVIRHLKSASIYEAGPHAVGLVFVNPSSRNRFGTVSCDSVKLELGDEPSQLITGSR.

Residues 128–404 enclose the Protein kinase domain; the sequence is TDTDEAVARG…ARELLVYPRY (277 aa). The active-site Proton acceptor is D252. Positions 340–364 are disordered; sequence MDNDALDSRRTGRDGDPVNPEGFGT. Residues 345–355 are compositionally biased toward basic and acidic residues; it reads LDSRRTGRDGD.

It belongs to the protein kinase superfamily. Ser/Thr protein kinase family.

The catalysed reaction is L-seryl-[protein] + ATP = O-phospho-L-seryl-[protein] + ADP + H(+). It catalyses the reaction L-threonyl-[protein] + ATP = O-phospho-L-threonyl-[protein] + ADP + H(+). In Ictalurid herpesvirus 1 (strain Auburn) (IcHV-1), this protein is Protein kinase ORF74 (ORF74).